The following is a 291-amino-acid chain: Acetylglutamate kinase (291 aa).

Substrate-binding positions include 64–65, Arg86, and Asn190; that span reads GG.

Belongs to the acetylglutamate kinase family. ArgB subfamily.

It is found in the cytoplasm. The catalysed reaction is N-acetyl-L-glutamate + ATP = N-acetyl-L-glutamyl 5-phosphate + ADP. The protein operates within amino-acid biosynthesis; L-arginine biosynthesis; N(2)-acetyl-L-ornithine from L-glutamate: step 2/4. In terms of biological role, catalyzes the ATP-dependent phosphorylation of N-acetyl-L-glutamate. This chain is Acetylglutamate kinase, found in Leptospira borgpetersenii serovar Hardjo-bovis (strain L550).